Here is a 303-residue protein sequence, read N- to C-terminus: Taste receptor type 2 member 13 (303 aa).

The Extracellular portion of the chain corresponds to 1–7 (MKSALPS). The chain crosses the membrane as a helical span at residues 8–28 (IFTLVIIAEFIIGNLSNGFIV). Topologically, residues 29–55 (LINCIDWVSKRELSSVDKLLIILAISR) are cytoplasmic. A helical membrane pass occupies residues 56–76 (IGLIWEILVSWFLALHYLAIF). Over 77–85 (VSGTGLRIM) the chain is Extracellular. The helical transmembrane segment at 86-106 (IFSWIVSNHFNLWLATILSIF) threads the bilayer. Residues 107 to 128 (YLLKIASFSSPAFLYLKWRVNK) lie on the Cytoplasmic side of the membrane. A helical transmembrane segment spans residues 129–149 (VILLILLGTLVFLFLNLIQIN). Residues 150–184 (MHIKDWLDRYERNTTWNFSMSDFETFSVSVKFTMT) are Extracellular-facing. Residues Asn-162 and Asn-166 are each glycosylated (N-linked (GlcNAc...) asparagine). Residues 185–205 (MFSLTPFTVAFISFLLLIFSL) traverse the membrane as a helical segment. The Cytoplasmic segment spans residues 206-232 (QKHLQKMQLNYKGHRDPKTKVHTNALK). The helical transmembrane segment at 233–253 (IVISFLLFYASFFLCVLXSWI) threads the bilayer. Residues 254-261 (SELYQNTV) are Extracellular-facing. The helical transmembrane segment at 262–282 (IYMLCETIGVFYPSSHSFLLI) threads the bilayer. Topologically, residues 283–303 (LGNAKLRQAFLLVAAKVWAKR) are cytoplasmic.

It belongs to the G-protein coupled receptor T2R family.

It localises to the membrane. Its function is as follows. Receptor that may play a role in the perception of bitterness and is gustducin-linked. May play a role in sensing the chemical composition of the gastrointestinal content. The activity of this receptor may stimulate alpha gustducin, mediate PLC-beta-2 activation and lead to the gating of TRPM5. This chain is Taste receptor type 2 member 13 (TAS2R13), found in Gorilla gorilla gorilla (Western lowland gorilla).